Consider the following 459-residue polypeptide: Xylose/arabinose-binding protein XacG (459 aa).

A helical transmembrane segment spans residues 19-36 (ALTVGAAAGIAGCTGGGG). Residues 27–68 (GIAGCTGGGGTETESTESGNGNGSGGSTDDTETSGSSSGESW) are disordered.

Belongs to the bacterial solute-binding protein 1 family. As to quaternary structure, the complex is composed of two ATP-binding proteins (XacJ and XacK), two transmembrane proteins (XacH and XacI) and a solute-binding protein (XacG).

Its subcellular location is the cell membrane. In terms of biological role, part of the ABC transporter complex XacGHIJK involved in the uptake of xylose and arabinose. The chain is Xylose/arabinose-binding protein XacG from Haloferax volcanii (strain ATCC 29605 / DSM 3757 / JCM 8879 / NBRC 14742 / NCIMB 2012 / VKM B-1768 / DS2) (Halobacterium volcanii).